The chain runs to 246 residues: MyoD family inhibitor domain-containing protein (246 aa).

The disordered stretch occupies residues Met1–Ile71. Residues Lys33–Ile43 are compositionally biased toward basic and acidic residues. Residues Thr44–Gly63 show a composition bias toward polar residues. Residues Gln74–Ser246 enclose the MDFI domain. Phosphoserine occurs at positions 128, 140, and 143.

This sequence belongs to the MDFI family. Interacts with HAND1; the interaction sequesters HAND1 into the nucleolus and inhibits its activity. Interacts (via C-terminus) with ZIC2. Interacts (via C-terminus) with AXIN1, the histidine-rich region of CCNT1/cyclin-T and weakly with LEF1. Interacts with CCNT2. Interacts with GATA2. Interacts (via C-terminus) with Piezo channel composed of PIEZO1 or PIEZO2; the interaction prolongs Piezo channel inactivation. As to quaternary structure, (Microbial infection) Interacts (via C-terminus) with HIV-1 Tat and Rev. Post-translationally, palmitoylated. As to expression, expressed in lymphatic tissues. Detected in the spleen, thymus, peripheral blood leukocytes as well as prostate, uterus and small intestine. Expressed in lymphatic endothelial cells.

Its subcellular location is the nucleus. It localises to the nucleolus. The protein resides in the cytoplasm. The protein localises to the secreted. Functionally, required to control the activity of various transcription factors through their sequestration in the cytoplasm. Retains nuclear Zic proteins ZIC1, ZIC2 and ZIC3 in the cytoplasm and inhibits their transcriptional activation. Modulates the expression from cellular promoters. Binds to the axin complex, resulting in an increase in the level of free beta-catenin. Affects axin regulation of the WNT and JNK signaling pathways. Involved in the development of lymphatic vessel valves. Required to promote lymphatic endothelial cell migration, in a process that involves down-regulation of integrin beta 1 activation and control of cell adhesion to the extracellular matrix. Regulates the activity of mechanosensitive Piezo channel. (Microbial infection) Modulates the expression from viral promoters. Down-regulates Tat-dependent transcription of the human immunodeficiency virus type 1 (HIV-1) LTR by interacting with HIV-1 Tat and Rev and impairing their nuclear import, probably by rendering the NLS domains inaccessible to importin-beta. Also stimulates activation of human T-cell leukemia virus type I (HTLV-I) LTR. The chain is MyoD family inhibitor domain-containing protein from Homo sapiens (Human).